Reading from the N-terminus, the 329-residue chain is MLDLENIIVIGVSHENLSLLERENFMRTRPKYIIERLYTEKKINAYINLSTCLRTEFYIELNSNIKAKEIKNLFSVDMIVKSRVEAIEYLFKVGCGFYSVIKGEDQILAQVKGAYAEALENEHSSKFLNIIFNKSIELGKKFRTKSMIAHNALSLEAISLKFIKSKFPNIEDKNIFILGIGELAQDILTLLTKEQLKNIYIANRTYHKAEQIKKEFDIVNIVDYREKYPKMIEADVIISATSAPHIVVEYDKFVAQMKENKDYLFIDLAVPRDVDERLANFKNIEIYNLDDIWEVYHLNSMNRDKLLEDYSYLIDEQMEKLIKTLNYYK.

Substrate contacts are provided by residues T51–R54, S99, E104–Q106, and Q110. C52 serves as the catalytic Nucleophile. NADP(+) is bound at residue G179 to A184.

The protein belongs to the glutamyl-tRNA reductase family. In terms of assembly, homodimer.

It catalyses the reaction (S)-4-amino-5-oxopentanoate + tRNA(Glu) + NADP(+) = L-glutamyl-tRNA(Glu) + NADPH + H(+). It participates in porphyrin-containing compound metabolism; protoporphyrin-IX biosynthesis; 5-aminolevulinate from L-glutamyl-tRNA(Glu): step 1/2. Its function is as follows. Catalyzes the NADPH-dependent reduction of glutamyl-tRNA(Glu) to glutamate 1-semialdehyde (GSA). This is Glutamyl-tRNA reductase from Fusobacterium nucleatum subsp. nucleatum (strain ATCC 25586 / DSM 15643 / BCRC 10681 / CIP 101130 / JCM 8532 / KCTC 2640 / LMG 13131 / VPI 4355).